Reading from the N-terminus, the 354-residue chain is Carbonic anhydrase 12 (354 aa).

An N-terminal signal peptide occupies residues 1–24 (MPRRSLHAAAVLLLVILKEQPSSP). The Extracellular segment spans residues 25 to 301 (APVNGSKWTY…VQVCTAAGLS (277 aa)). N-linked (GlcNAc...) asparagine glycans are attached at residues asparagine 28 and asparagine 80. An Alpha-carbonic anhydrase domain is found at 30-289 (SKWTYFGPDG…FDERLVYTSF (260 aa)). Cysteines 50 and 230 form a disulfide. Histidine 94 serves as the catalytic Proton donor/acceptor. Histidine 119, histidine 121, and histidine 145 together coordinate Zn(2+). Asparagine 162 is a glycosylation site (N-linked (GlcNAc...) asparagine). 226–227 (TT) provides a ligand contact to substrate. Residues 302–322 (LGIILSLALAGILGICIVVVV) traverse the membrane as a helical segment. Topologically, residues 323–354 (SIWLFRRKSIKKGDNKGVIYKPATKMETEAHA) are cytoplasmic.

Belongs to the alpha-carbonic anhydrase family. Homodimer. Zn(2+) serves as cofactor. As to expression, highly expressed in colon, kidney, prostate, intestine and activated lymphocytes. Expressed at much higher levels in the renal cell cancers than in surrounding normal kidney tissue. Moderately expressed in pancreas, ovary and testis. Expressed in sweat glands and bronchiolar epithelium.

Its subcellular location is the membrane. It is found in the cell membrane. The catalysed reaction is hydrogencarbonate + H(+) = CO2 + H2O. Its activity is regulated as follows. Inhibited by coumarins, saccharin, sulfonamide derivatives such as acetazolamide (AZA), benzenesulfonamide and derivatives (4-carboxyethylbenzene-sulfonamide, 4-carboxyethylbenzene-sulfonamide ethyl ester, 4-(acetyl-2-aminoethyl)benzene-sulfonamide, 4-aminoethylbenzene-sulfonamide) and Foscarnet (phosphonoformate trisodium salt). Functionally, reversible hydration of carbon dioxide. In Homo sapiens (Human), this protein is Carbonic anhydrase 12.